Reading from the N-terminus, the 637-residue chain is Threonine--tRNA ligase (637 aa).

One can recognise a TGS domain in the interval 1-61 (MLNITLPDCS…VEDSAVQIIT (61 aa)). Residues 242–533 (DHRKLGKQLD…LIENHAGSFP (292 aa)) are catalytic. Cysteine 333, histidine 384, and histidine 510 together coordinate Zn(2+).

The protein belongs to the class-II aminoacyl-tRNA synthetase family. Homodimer. It depends on Zn(2+) as a cofactor.

The protein localises to the cytoplasm. It carries out the reaction tRNA(Thr) + L-threonine + ATP = L-threonyl-tRNA(Thr) + AMP + diphosphate + H(+). Its function is as follows. Catalyzes the attachment of threonine to tRNA(Thr) in a two-step reaction: L-threonine is first activated by ATP to form Thr-AMP and then transferred to the acceptor end of tRNA(Thr). Also edits incorrectly charged L-seryl-tRNA(Thr). The chain is Threonine--tRNA ligase from Neisseria gonorrhoeae (strain ATCC 700825 / FA 1090).